Here is a 128-residue protein sequence, read N- to C-terminus: Early 4 ORF1 protein (128 aa).

At 1–26 the chain is on the cytoplasmic side; the sequence is MAAAVEALYVVLEREGAILPRQEGFS. A helical membrane pass occupies residues 27 to 47; the sequence is GVYVFFSPINFVIPPMGAVML. The Extracellular portion of the chain corresponds to 48–99; that stretch reads SLRLRVCIPPGYFGRFLALTDVNQPDVFTESYIMTPDMTEELSVVLFNHGDQ. A helical transmembrane segment spans residues 100 to 120; that stretch reads FFYGHAGMAVVRLMLIRVVFP. The Cytoplasmic segment spans residues 121 to 128; it reads VVRQASNV. The short motif at 125 to 128 is the PBZ domain binding motif element; the sequence is ASNV.

It belongs to the adenoviridae E4-ORF1 family. As to quaternary structure, may interact with host PDZ proteins through the PDZ domain binding motif (PBM), namely host DLG1, PATJ and TJP2.

The protein resides in the host membrane. In terms of biological role, may modulate tight-junctions functions of infected cells through interactions with PDZ proteins. E4 ORF1 has ben show for Adenovirus 9 to interact with protein involved in tight junction regulation. May play a role in mTOR activation by activating PI3-kinase, thus overriding cellular checkpoint for translation. In Human adenovirus C serotype 2 (HAdV-2), this protein is Early 4 ORF1 protein.